Consider the following 241-residue polypeptide: Transmembrane protein 176A (241 aa).

Phosphoserine is present on serine 38. The next 4 membrane-spanning stretches (helical) occupy residues 65–85 (WVMQ…LYIF), 93–113 (SGAP…AFIY), 127–147 (LLAL…AGRF), and 193–213 (LFIS…LASL).

It belongs to the TMEM176 family. In terms of assembly, interacts with MCOLN2.

It localises to the membrane. The protein is Transmembrane protein 176A (TMEM176A) of Bos taurus (Bovine).